A 227-amino-acid chain; its full sequence is UPF0173 metal-dependent hydrolase BCQ_4418 (227 aa).

The protein belongs to the UPF0173 family.

This Bacillus cereus (strain Q1) protein is UPF0173 metal-dependent hydrolase BCQ_4418.